A 341-amino-acid polypeptide reads, in one-letter code: Anthranilate phosphoribosyltransferase (341 aa).

5-phospho-alpha-D-ribose 1-diphosphate contacts are provided by residues Gly81, 84-85, 91-94, 109-117, and Ser121; these read GD, NVST, and KHGNRSVSS. Gly81 contacts anthranilate. Ser93 is a Mg(2+) binding site. Asn112 provides a ligand contact to anthranilate. Arg167 provides a ligand contact to anthranilate. The Mg(2+) site is built by Asp226 and Glu227.

This sequence belongs to the anthranilate phosphoribosyltransferase family. Homodimer. Mg(2+) is required as a cofactor.

The enzyme catalyses N-(5-phospho-beta-D-ribosyl)anthranilate + diphosphate = 5-phospho-alpha-D-ribose 1-diphosphate + anthranilate. The protein operates within amino-acid biosynthesis; L-tryptophan biosynthesis; L-tryptophan from chorismate: step 2/5. Functionally, catalyzes the transfer of the phosphoribosyl group of 5-phosphorylribose-1-pyrophosphate (PRPP) to anthranilate to yield N-(5'-phosphoribosyl)-anthranilate (PRA). This chain is Anthranilate phosphoribosyltransferase, found in Teredinibacter turnerae (strain ATCC 39867 / T7901).